The primary structure comprises 122 residues: Small ribosomal subunit protein uS13 (122 aa).

Residues 95–122 form a disordered region; that stretch reads GLPVRGQRTKTNSRTRKGRRKTVANKKK. Basic residues predominate over residues 101-122; sequence QRTKTNSRTRKGRRKTVANKKK.

Belongs to the universal ribosomal protein uS13 family. As to quaternary structure, part of the 30S ribosomal subunit. Forms a loose heterodimer with protein S19. Forms two bridges to the 50S subunit in the 70S ribosome.

Functionally, located at the top of the head of the 30S subunit, it contacts several helices of the 16S rRNA. In the 70S ribosome it contacts the 23S rRNA (bridge B1a) and protein L5 of the 50S subunit (bridge B1b), connecting the 2 subunits; these bridges are implicated in subunit movement. Contacts the tRNAs in the A and P-sites. The protein is Small ribosomal subunit protein uS13 of Protochlamydia amoebophila (strain UWE25).